Here is a 324-residue protein sequence, read N- to C-terminus: Endochitinase B (324 aa).

Residues Met-1–Ala-23 form the signal peptide. The region spanning Glu-24–Gly-65 is the Chitin-binding type-1 domain. Disulfide bonds link Cys-26–Cys-41, Cys-35–Cys-47, Cys-40–Cys-54, and Cys-59–Cys-63. A 4-hydroxyproline mark is found at Pro-67 and Pro-69. 3 disulfides stabilise this stretch: Cys-96–Cys-158, Cys-170–Cys-178, and Cys-277–Cys-309. The active-site Proton donor is Glu-140. Residues Gly-318–Met-324 constitute a propeptide, removed in mature form.

The protein belongs to the glycosyl hydrolase 19 family. Chitinase class I subfamily. In terms of processing, the 4-hydroxyproline residues are not glycosylated in this plant vacuolar protein.

It localises to the vacuole. It carries out the reaction Random endo-hydrolysis of N-acetyl-beta-D-glucosaminide (1-&gt;4)-beta-linkages in chitin and chitodextrins.. Defense against chitin-containing fungal pathogens. This Nicotiana tabacum (Common tobacco) protein is Endochitinase B (CHN50).